An 882-amino-acid polypeptide reads, in one-letter code: Ubiquitin carboxyl-terminal hydrolase 4 (882 aa).

Positions Tyr-182–Thr-308 constitute a Rhodanese domain. The segment covering Lys-382–Ser-399 has biased composition (low complexity). The interval Lys-382–Pro-411 is disordered. Positions Val-402 to Pro-411 are enriched in polar residues. In terms of domain architecture, USP spans Val-519 to Val-879. Cys-528 acts as the Nucleophile in catalysis. Residue His-836 is the Proton acceptor of the active site.

This sequence belongs to the peptidase C19 family.

It is found in the cytoplasm. Its subcellular location is the late endosome membrane. The catalysed reaction is Thiol-dependent hydrolysis of ester, thioester, amide, peptide and isopeptide bonds formed by the C-terminal Gly of ubiquitin (a 76-residue protein attached to proteins as an intracellular targeting signal).. RFU1 is an inhibitor of deubiquitination activity. Its function is as follows. Ubiquitin thioesterase that acts at the late endosome/prevacuolar compartment to recover ubiquitin from ubiquitinated membrane proteins en route to the vacuole. Also removes ubiquitin from soluble proteins targeted to proteasomes. Is essential to maintain a normal level of free ubiquitin. Required for promoting coordination of DNA replication and avoids DNA overreplication. This is Ubiquitin carboxyl-terminal hydrolase 4 (DOA4) from Vanderwaltozyma polyspora (strain ATCC 22028 / DSM 70294 / BCRC 21397 / CBS 2163 / NBRC 10782 / NRRL Y-8283 / UCD 57-17) (Kluyveromyces polysporus).